A 229-amino-acid polypeptide reads, in one-letter code: Uracil-DNA glycosylase (229 aa).

D64 functions as the Proton acceptor in the catalytic mechanism.

Belongs to the uracil-DNA glycosylase (UDG) superfamily. UNG family.

It is found in the cytoplasm. It catalyses the reaction Hydrolyzes single-stranded DNA or mismatched double-stranded DNA and polynucleotides, releasing free uracil.. Excises uracil residues from the DNA which can arise as a result of misincorporation of dUMP residues by DNA polymerase or due to deamination of cytosine. The chain is Uracil-DNA glycosylase from Klebsiella pneumoniae (strain 342).